Reading from the N-terminus, the 174-residue chain is NAD(P)H-quinone oxidoreductase subunit J, chloroplastic (174 aa).

Belongs to the complex I 30 kDa subunit family. As to quaternary structure, NDH is composed of at least 16 different subunits, 5 of which are encoded in the nucleus.

It localises to the plastid. It is found in the chloroplast thylakoid membrane. The enzyme catalyses a plastoquinone + NADH + (n+1) H(+)(in) = a plastoquinol + NAD(+) + n H(+)(out). It catalyses the reaction a plastoquinone + NADPH + (n+1) H(+)(in) = a plastoquinol + NADP(+) + n H(+)(out). In terms of biological role, NDH shuttles electrons from NAD(P)H:plastoquinone, via FMN and iron-sulfur (Fe-S) centers, to quinones in the photosynthetic chain and possibly in a chloroplast respiratory chain. The immediate electron acceptor for the enzyme in this species is believed to be plastoquinone. Couples the redox reaction to proton translocation, and thus conserves the redox energy in a proton gradient. The sequence is that of NAD(P)H-quinone oxidoreductase subunit J, chloroplastic from Mesostigma viride (Green alga).